Reading from the N-terminus, the 244-residue chain is Geranylgeranylglyceryl phosphate synthase (244 aa).

The Mg(2+) site is built by Asp-20 and Ser-49. Sn-glycerol 1-phosphate is bound by residues 169–175 (YLEAGSG), 200–201 (GG), and 222–223 (GT).

The protein belongs to the GGGP/HepGP synthase family. Group II subfamily. Requires Mg(2+) as cofactor.

The protein localises to the cytoplasm. The enzyme catalyses sn-glycerol 1-phosphate + (2E,6E,10E)-geranylgeranyl diphosphate = sn-3-O-(geranylgeranyl)glycerol 1-phosphate + diphosphate. It participates in membrane lipid metabolism; glycerophospholipid metabolism. In terms of biological role, prenyltransferase that catalyzes the transfer of the geranylgeranyl moiety of geranylgeranyl diphosphate (GGPP) to the C3 hydroxyl of sn-glycerol-1-phosphate (G1P). This reaction is the first ether-bond-formation step in the biosynthesis of archaeal membrane lipids. The polypeptide is Geranylgeranylglyceryl phosphate synthase (Korarchaeum cryptofilum (strain OPF8)).